Consider the following 275-residue polypeptide: Acetyl-coenzyme A carboxylase carboxyl transferase subunit beta (275 aa).

Residues 18–275 (KDNAGPAVPS…IHRLGGEMHA (258 aa)) enclose the CoA carboxyltransferase N-terminal domain. The segment at 23-47 (PAVPSNTHSSKSNGNPVSEMKENKR) is disordered. Positions 26 to 38 (PSNTHSSKSNGNP) are enriched in polar residues.

Belongs to the AccD/PCCB family. As to quaternary structure, acetyl-CoA carboxylase is a heterohexamer composed of biotin carboxyl carrier protein (AccB), biotin carboxylase (AccC) and two subunits each of ACCase subunit alpha (AccA) and ACCase subunit beta (AccD).

It is found in the cytoplasm. The catalysed reaction is N(6)-carboxybiotinyl-L-lysyl-[protein] + acetyl-CoA = N(6)-biotinyl-L-lysyl-[protein] + malonyl-CoA. It participates in lipid metabolism; malonyl-CoA biosynthesis; malonyl-CoA from acetyl-CoA: step 1/1. In terms of biological role, component of the acetyl coenzyme A carboxylase (ACC) complex. Biotin carboxylase (BC) catalyzes the carboxylation of biotin on its carrier protein (BCCP) and then the CO(2) group is transferred by the transcarboxylase to acetyl-CoA to form malonyl-CoA. The protein is Acetyl-coenzyme A carboxylase carboxyl transferase subunit beta of Alkaliphilus oremlandii (strain OhILAs) (Clostridium oremlandii (strain OhILAs)).